Consider the following 121-residue polypeptide: Large ribosomal subunit protein uL14 (121 aa).

The protein belongs to the universal ribosomal protein uL14 family. Part of the 50S ribosomal subunit. Forms a cluster with proteins L3 and L19. In the 70S ribosome, L14 and L19 interact and together make contacts with the 16S rRNA in bridges B5 and B8.

Its function is as follows. Binds to 23S rRNA. Forms part of two intersubunit bridges in the 70S ribosome. This is Large ribosomal subunit protein uL14 from Prochlorococcus marinus (strain MIT 9313).